A 211-amino-acid polypeptide reads, in one-letter code: Thiamine-phosphate synthase (211 aa).

4-amino-2-methyl-5-(diphosphooxymethyl)pyrimidine contacts are provided by residues 37–41 (QLRIK) and Asn69. Positions 70 and 89 each coordinate Mg(2+). A 4-amino-2-methyl-5-(diphosphooxymethyl)pyrimidine-binding site is contributed by Ser108. Position 134–136 (134–136 (TQT)) interacts with 2-[(2R,5Z)-2-carboxy-4-methylthiazol-5(2H)-ylidene]ethyl phosphate. Lys137 provides a ligand contact to 4-amino-2-methyl-5-(diphosphooxymethyl)pyrimidine. 2-[(2R,5Z)-2-carboxy-4-methylthiazol-5(2H)-ylidene]ethyl phosphate-binding positions include Gly166 and 186-187 (VS).

Belongs to the thiamine-phosphate synthase family. It depends on Mg(2+) as a cofactor.

The enzyme catalyses 2-[(2R,5Z)-2-carboxy-4-methylthiazol-5(2H)-ylidene]ethyl phosphate + 4-amino-2-methyl-5-(diphosphooxymethyl)pyrimidine + 2 H(+) = thiamine phosphate + CO2 + diphosphate. The catalysed reaction is 2-(2-carboxy-4-methylthiazol-5-yl)ethyl phosphate + 4-amino-2-methyl-5-(diphosphooxymethyl)pyrimidine + 2 H(+) = thiamine phosphate + CO2 + diphosphate. It catalyses the reaction 4-methyl-5-(2-phosphooxyethyl)-thiazole + 4-amino-2-methyl-5-(diphosphooxymethyl)pyrimidine + H(+) = thiamine phosphate + diphosphate. Its pathway is cofactor biosynthesis; thiamine diphosphate biosynthesis; thiamine phosphate from 4-amino-2-methyl-5-diphosphomethylpyrimidine and 4-methyl-5-(2-phosphoethyl)-thiazole: step 1/1. Its function is as follows. Condenses 4-methyl-5-(beta-hydroxyethyl)thiazole monophosphate (THZ-P) and 2-methyl-4-amino-5-hydroxymethyl pyrimidine pyrophosphate (HMP-PP) to form thiamine monophosphate (TMP). The chain is Thiamine-phosphate synthase from Shigella dysenteriae serotype 1 (strain Sd197).